A 302-amino-acid polypeptide reads, in one-letter code: Heme A synthase (302 aa).

At 1-8 (MFSKKNLK) the chain is on the cytoplasmic side. A helical transmembrane segment spans residues 9–29 (WLSVLATVIMAFVQLGGALVT). Residues 30–67 (KTGSADGCGSDWPLCHGAFLPQNLPIQTLIELSHRAVS) are Extracellular-facing. Cysteines 37 and 44 form a disulfide. The active site involves glutamate 60. Histidine 63 serves as a coordination point for heme o. A helical membrane pass occupies residues 68-88 (GLSLIVVLWLVIVAWKHIGYI). The Cytoplasmic segment spans residues 89 to 93 (KEVKP). Residues 94–114 (LSCISVGFLLIQALVGAAAVM) traverse the membrane as a helical segment. Residues 115-122 (WQQNAYVL) lie on the Extracellular side of the membrane. The helical transmembrane segment at 123–143 (ALHFGISLISFSSVFVLTLII) threads the bilayer. A heme o-binding site is contributed by histidine 125. Residues 144 to 161 (YEVDRKYEADELFIRKPL) are Cytoplasmic-facing. Residues 162-182 (RIYTWIMALIVYMTIYTGALV) form a helical membrane-spanning segment. Residues 183–215 (RHKEASLAYGQWPLPFNDLMPHNVQDWVNLTHR) lie on the Extracellular side of the membrane. Residue histidine 214 participates in heme b binding. The helical transmembrane segment at 216-236 (GMALIAFIWILITFIHAVNNY) threads the bilayer. Over 237–244 (RENRTIRY) the chain is Cytoplasmic. Residues 245–265 (GYTAAFILVILQVTTGALSII) traverse the membrane as a helical segment. Residues 266–271 (TEVNLF) lie on the Extracellular side of the membrane. Residues 272 to 292 (IALLHALFITLLFGLIAYFII) traverse the membrane as a helical segment. A heme b-binding site is contributed by histidine 276. At 293–302 (LMLRTIRSGG) the chain is on the cytoplasmic side.

The protein belongs to the COX15/CtaA family. Type 1 subfamily. In terms of assembly, interacts with CtaB. The cofactor is heme b.

Its subcellular location is the cell membrane. The enzyme catalyses Fe(II)-heme o + 2 A + H2O = Fe(II)-heme a + 2 AH2. Its pathway is porphyrin-containing compound metabolism; heme A biosynthesis; heme A from heme O: step 1/1. Catalyzes the conversion of heme O to heme A by two successive hydroxylations of the methyl group at C8. The first hydroxylation forms heme I, the second hydroxylation results in an unstable dihydroxymethyl group, which spontaneously dehydrates, resulting in the formyl group of heme A. In Staphylococcus saprophyticus subsp. saprophyticus (strain ATCC 15305 / DSM 20229 / NCIMB 8711 / NCTC 7292 / S-41), this protein is Heme A synthase.